A 367-amino-acid chain; its full sequence is Serine/threonine-protein kinase Sgk2 (367 aa).

Positions 1–26 (MNSSPAGTPSPQPSRANGNINLGPSA) are disordered. Phosphoserine is present on Ser10. Positions 35–292 (FDFLKVIGKG…FLEIKNHVFF (258 aa)) constitute a Protein kinase domain. Residues 41-49 (IGKGNYGKV) and Lys64 each bind ATP. Positions 68–78 (KKSILKKKEQS) match the Nuclear localization signal motif. Asp159 serves as the catalytic Proton acceptor. Residue Thr193 is modified to Phosphothreonine; by PDPK1. The AGC-kinase C-terminal domain maps to 293 to 367 (SPINWDDLYH…APEDDDILDC (75 aa)). Phosphoserine is present on residues Ser334 and Ser356. Tyr357 is modified (phosphotyrosine).

Belongs to the protein kinase superfamily. AGC Ser/Thr protein kinase family. Activated by phosphorylation on Ser-356 by an unknown kinase (may be mTORC2 but not confirmed), transforming it into a substrate for PDPK1 which then phosphorylates it on Thr-193. As to expression, highly expressed in liver, kidney and pancreas, and at lower levels in brain.

Its subcellular location is the cytoplasm. It localises to the nucleus. The catalysed reaction is L-seryl-[protein] + ATP = O-phospho-L-seryl-[protein] + ADP + H(+). It catalyses the reaction L-threonyl-[protein] + ATP = O-phospho-L-threonyl-[protein] + ADP + H(+). Its activity is regulated as follows. Two specific sites, one in the kinase domain (Thr-193) and the other in the C-terminal regulatory region (Ser-356), need to be phosphorylated for its full activation. Serine/threonine-protein kinase which is involved in the regulation of a wide variety of ion channels, membrane transporters, cell growth, survival and proliferation. Up-regulates Na(+) channels: SCNN1A/ENAC, K(+) channels: KCNA3/Kv1.3, KCNE1 and KCNQ1, amino acid transporter: SLC6A19, glutamate transporter: SLC1A6/EAAT4, glutamate receptors: GRIA1/GLUR1 and GRIK2/GLUR6, Na(+)/H(+) exchanger: SLC9A3/NHE3, and the Na(+)/K(+) ATPase. The sequence is that of Serine/threonine-protein kinase Sgk2 (SGK2) from Homo sapiens (Human).